A 156-amino-acid polypeptide reads, in one-letter code: MMSDVELVFKDESDCLVVIMGHVVTRLLSYRQLHHLTPESAGVLIGERRGQHLVVCDISEPGSGDIRQRCRVDRRGVHHQSRVNEAFERSAGTHLYLGEWHTHPEDRPFPSATDRHSWRRNIVSDESMLLLIVGRKDFWLGKKERELITVFKKIES.

The MPN domain occupies 16 to 156 (LVVIMGHVVT…LITVFKKIES (141 aa)). Residue Glu39 is the Proton donor/acceptor of the active site. Residues His101, His103, and Asp114 each coordinate Zn(2+). The JAMM motif signature appears at 101 to 114 (HTHPEDRPFPSATD).

The protein belongs to the peptidase M67B family. Cap3 isopeptidase subfamily. The cofactor is Zn(2+).

Cleavage of conjugated proteins is inhibited by EDTA. In terms of biological role, metalloprotease priming reversal component of a CBASS system. CBASS (cyclic oligonucleotide-based antiphage signaling system) provides immunity against bacteriophages. The CD-NTase protein (DncV) synthesizes cyclic nucleotides in response to infection; these serve as specific second messenger signals. The signals activate a diverse range of effectors, leading to bacterial cell death and thus abortive phage infection. A type II-A(GA) CBASS system. Reverses the primed state of DncV, the CD-NTase. Cleaves a DncV-GFP (green fluorescent protein) fusion protein precisely at the C-terminus of DncV. Overexpression decreases the efficacy of CBASS protection against phages T2, T4, T5 and T6, blocks formation of DncV-conjugates in vivo, and inhibits in vivo activation of DncV. Antagonism of phage defense upon overexpression is CBASS-system specific, Cap3 from this bacteria only antagonizes its cognate CBASS system and not that of C.freundii, E.coli or E.hormaechei. Its function is as follows. Protects E.coli against phage infection. When the CBASS operon (capV-dncV-cap2-cap3) is introduced in E.coli MG1655 there is about 100-fold protection against phages P1 and T2. When the operon is introduced in E.coli MG1655 there is a more than 10(3) decrease in the efficiency of T2 plaque formation. Protects 100-fold against phage T5, offers no protection against T7. When the operon is introduced in E.coli MG1655 it protects against phages T2, T4, T5 and T6. Another paper shows the operon confers protection against phages P1, T2, T5 and T6 but not T4 or lambda. The chain is CD-NTase/cGAS isopeptidase from Vibrio cholerae serotype O1 (strain ATCC 39315 / El Tor Inaba N16961).